The chain runs to 465 residues: Putative F-box/LRR-repeat protein At3g28410 (465 aa).

The F-box domain maps to 27–73; the sequence is ADFINYMPDDILHHILSFIPTDLAMRTSVLSRRWRHVWCETPCLDIK. LRR repeat units follow at residues 127-155, 178-203, 207-225, 278-302, 332-357, 402-427, and 447-465; these read VRDF…DVTL, FCQI…TLDT, LERL…DINR, ADRY…TVGE, FVRS…TLHT, TSKL…VVWL, and VETL…QSNC.

In Arabidopsis thaliana (Mouse-ear cress), this protein is Putative F-box/LRR-repeat protein At3g28410.